An 898-amino-acid polypeptide reads, in one-letter code: Endoplasmic reticulum metallopeptidase 1 (898 aa).

An N-acetylmethionine modification is found at Met1. The tract at residues 1–55 is disordered; it reads MEWSSESAAVRRHRGTAERREGEAAASHRQREASAQEDAKGVGRMWGKTENGGGS. At 1-66 the chain is on the cytoplasmic side; that stretch reads MEWSSESAAV…VAKTALSEAR (66 aa). Residues 29–41 show a composition bias toward basic and acidic residues; sequence RQREASAQEDAKG. The chain crosses the membrane as a helical span at residues 67–87; it reads TALALALYLLALRALVQLSLQ. The Lumenal portion of the chain corresponds to 88 to 393; the sequence is RLVLSRTSGL…SSSEYRHGSM (306 aa). N-linked (GlcNAc...) asparagine glycosylation is present at Asn176. Cys198 and Cys216 form a disulfide bridge. Zn(2+)-binding residues include His199 and Asp211. The active-site Proton acceptor is the Glu245. The Zn(2+) site is built by Glu246, Glu272, and His348. Residues 394-414 traverse the membrane as a helical segment; it reads VFFDVLGLLVIAYPSRVGSII. Residues 415-451 lie on the Cytoplasmic side of the membrane; the sequence is NYMVVMAVVLYLGKKLLRPKHRNANYMRDFLCGLGIT. Residues 452 to 472 traverse the membrane as a helical segment; it reads FISWFTSLVTVLIIAVFISLI. Residues 473 to 480 lie on the Lumenal side of the membrane; sequence GQSLSWYN. A helical transmembrane segment spans residues 481–501; sequence YFYIAVCLYGTATVAKIIFIH. The Cytoplasmic segment spans residues 502-515; it reads TLAKRFYYMNASDL. A helical membrane pass occupies residues 516–538; the sequence is YLGELFFDTSLFVHCAFLVALTY. At 539–542 the chain is on the lumenal side; sequence QGFC. The helical transmembrane segment at 543-562 threads the bilayer; sequence SAFMSAVWVVFPLLTKLCVY. At 563–573 the chain is on the cytoplasmic side; that stretch reads KDFKKHGAQGR. A helical membrane pass occupies residues 574 to 594; that stretch reads FVALYLLGMFIPYLYGLYLIW. Residues 595–615 are Lumenal-facing; the sequence is AVFEMFTPILGRSGSEIPPDV. The helical transmembrane segment at 616–636 threads the bilayer; that stretch reads VLASILAVCVMILSSYFITFI. The Cytoplasmic segment spans residues 637-645; it reads YLVNSTKKT. The helical transmembrane segment at 646-666 threads the bilayer; that stretch reads ILTLILVCAVTFLLVCSGAFF. The Lumenal segment spans residues 667–898; it reads PYSSNPESPK…WVSTYSLFVF (232 aa). Asn724 carries N-linked (GlcNAc...) asparagine glycosylation.

Belongs to the peptidase M28 family. It depends on Zn(2+) as a cofactor.

The protein localises to the endoplasmic reticulum membrane. Within the ovary, required for the organization of somatic cells and oocytes into discrete follicular structures. The protein is Endoplasmic reticulum metallopeptidase 1 of Mus musculus (Mouse).